A 627-amino-acid chain; its full sequence is Coiled-coil domain-containing protein 22 (627 aa).

Residues 1-321 (MEEADRILIH…VSDVPATSRR (321 aa)) form a sufficient for interaction with COMMD1 region. The interval 1-447 (MEEADRILIH…LQDCRELESS (447 aa)) is sufficicient and required for interaction with CCDC93. Positions 218–243 (TGRDRPGDEDWVHRTSRLPPQEDTRA) are disordered. Positions 219-230 (GRDRPGDEDWVH) are enriched in basic and acidic residues. Positions 320–627 (RRPEQVTWAA…AGLLGRVREA (308 aa)) form a coiled coil. Position 410 is a phosphoserine (Ser410).

This sequence belongs to the CCDC22 family. Component of the commander complex consisting of the CCC subcomplex and the retriever subcomplex. Component of the CCC (COMMD/CCDC22/CCDC93) subcomplex consisting of COMMD1, COMMD2, COMMD3, COMMD4, COMMD5, COMMD6, COMMD7, COMMD8, COMMD9, COMMD10, CCDC22 and CCDC93. Forms a coiled-coil heterodimer with CCDC22; this heterodimer interacts with the guanine nucleotide exchange factor DENND10; the interaction is direct. Interacts with CUL1, CUL2, CUL3, SKP1, BTRC. Interacts with SNX17 and SNX31. Interacts with CPNE1 and CPNE4. As to expression, widely expressed in adult tissues and in fetal liver and brain, with highest levels in prostate and lowest in skeletal muscle.

It localises to the endosome. The protein localises to the cytoplasm. It is found in the cytoskeleton. The protein resides in the microtubule organizing center. Its subcellular location is the centrosome. In terms of biological role, component of the commander complex that is essential for endosomal recycling of transmembrane cargos; the Commander complex is composed of composed of the CCC subcomplex and the retriever subcomplex. Component of the CCC complex, which is involved in the regulation of endosomal recycling of surface proteins, including integrins, signaling receptor and channels. Involved in regulation of NF-kappa-B signaling. Promotes ubiquitination of I-kappa-B-kinase subunit IKBKB and its subsequent proteasomal degradation leading to NF-kappa-B activation; the function may involve association with COMMD8 and a CUL1-dependent E3 ubiquitin ligase complex. May down-regulate NF-kappa-B activity via association with COMMD1 and involving a CUL2-dependent E3 ubiquitin ligase complex. Regulates the cellular localization of COMM domain-containing proteins, such as COMMD1 and COMMD10. Component of the CCC complex, which is involved in the regulation of endosomal recycling of surface proteins, including integrins, signaling receptor and channels. The CCC complex associates with SNX17, retriever and WASH complexes to prevent lysosomal degradation and promote cell surface recycling of numerous cargos such as integrins ITGA5:ITGB1. Plays a role in copper ion homeostasis. Involved in copper-dependent ATP7A trafficking between the trans-Golgi network and vesicles in the cell periphery; the function is proposed to depend on its association within the CCC complex and cooperation with the WASH complex on early endosomes. Functionally, (Microbial infection) The CCC complex, in collaboration with the heterotrimeric retriever complex, mediates the exit of human papillomavirus to the cell surface. In Homo sapiens (Human), this protein is Coiled-coil domain-containing protein 22 (CCDC22).